The sequence spans 374 residues: Biotin synthase (374 aa).

One can recognise a Radical SAM core domain in the interval 51–278 (NTVKVNYLVN…DTEIRIAGGR (228 aa)). Residues cysteine 66, cysteine 70, and cysteine 73 each coordinate [4Fe-4S] cluster. Cysteine 110, cysteine 143, cysteine 203, and arginine 273 together coordinate [2Fe-2S] cluster. A disordered region spans residues 346–374 (IAGGTSVAGSAPDPAIRRRGAGTDVPANA).

Belongs to the radical SAM superfamily. Biotin synthase family. As to quaternary structure, homodimer. It depends on [4Fe-4S] cluster as a cofactor. [2Fe-2S] cluster serves as cofactor.

The enzyme catalyses (4R,5S)-dethiobiotin + (sulfur carrier)-SH + 2 reduced [2Fe-2S]-[ferredoxin] + 2 S-adenosyl-L-methionine = (sulfur carrier)-H + biotin + 2 5'-deoxyadenosine + 2 L-methionine + 2 oxidized [2Fe-2S]-[ferredoxin]. The protein operates within cofactor biosynthesis; biotin biosynthesis; biotin from 7,8-diaminononanoate: step 2/2. In terms of biological role, catalyzes the conversion of dethiobiotin (DTB) to biotin by the insertion of a sulfur atom into dethiobiotin via a radical-based mechanism. This chain is Biotin synthase, found in Nocardioides sp. (strain ATCC BAA-499 / JS614).